Here is a 1257-residue protein sequence, read N- to C-terminus: Probable aldehyde oxidase gad-3 (1257 aa).

One can recognise a 2Fe-2S ferredoxin-type domain in the interval Thr4–Val91. [2Fe-2S] cluster contacts are provided by Cys43, Cys48, Cys51, and Cys73. The region spanning Leu229–Leu459 is the FAD-binding PCMH-type domain. Glu1208 acts as the Proton acceptor in catalysis.

Belongs to the xanthine dehydrogenase family. It depends on [2Fe-2S] cluster as a cofactor. The cofactor is FAD. Mo-molybdopterin serves as cofactor.

It carries out the reaction an aldehyde + O2 + H2O = a carboxylate + H2O2 + H(+). May be involved in the metabolism of 1-methylnicotinamide (MNA). Linked to regulation of longevity through generation of reactive oxygen species, where it probably functions in a pathway downstream of the sirtuin sir-2.1 and the nicotinamide N-methyltransferase anmt-1. The polypeptide is Probable aldehyde oxidase gad-3 (Caenorhabditis elegans).